The primary structure comprises 114 residues: uncharacterized protein (114 aa).

This is an uncharacterized protein from Escherichia coli O6:H1 (strain CFT073 / ATCC 700928 / UPEC).